The primary structure comprises 244 residues: Triosephosphate isomerase (244 aa).

9–11 (NWK) contacts substrate. The Electrophile role is filled by histidine 93. The Proton acceptor role is filled by glutamate 160. 2 residues coordinate substrate: glycine 166 and serine 206.

It belongs to the triosephosphate isomerase family. In terms of assembly, homodimer.

The protein localises to the cytoplasm. The enzyme catalyses D-glyceraldehyde 3-phosphate = dihydroxyacetone phosphate. The protein operates within carbohydrate biosynthesis; gluconeogenesis. It participates in carbohydrate degradation; glycolysis; D-glyceraldehyde 3-phosphate from glycerone phosphate: step 1/1. Its function is as follows. Involved in the gluconeogenesis. Catalyzes stereospecifically the conversion of dihydroxyacetone phosphate (DHAP) to D-glyceraldehyde-3-phosphate (G3P). The chain is Triosephosphate isomerase from Mycoplasma genitalium (strain ATCC 33530 / DSM 19775 / NCTC 10195 / G37) (Mycoplasmoides genitalium).